The sequence spans 498 residues: Histidine--tRNA ligase (498 aa).

This sequence belongs to the class-II aminoacyl-tRNA synthetase family. Homodimer.

The protein localises to the cytoplasm. The catalysed reaction is tRNA(His) + L-histidine + ATP = L-histidyl-tRNA(His) + AMP + diphosphate + H(+). This Bartonella quintana (strain Toulouse) (Rochalimaea quintana) protein is Histidine--tRNA ligase.